Here is a 227-residue protein sequence, read N- to C-terminus: Triosephosphate isomerase (227 aa).

Substrate is bound at residue Asn6 to Lys8. His85 acts as the Electrophile in catalysis. The Proton acceptor role is filled by Glu152. Residues Gly158 and Ser188 each coordinate substrate.

This sequence belongs to the triosephosphate isomerase family. Homodimer.

It is found in the cytoplasm. It carries out the reaction D-glyceraldehyde 3-phosphate = dihydroxyacetone phosphate. It functions in the pathway carbohydrate biosynthesis; gluconeogenesis. It participates in carbohydrate degradation; glycolysis; D-glyceraldehyde 3-phosphate from glycerone phosphate: step 1/1. Involved in the gluconeogenesis. Catalyzes stereospecifically the conversion of dihydroxyacetone phosphate (DHAP) to D-glyceraldehyde-3-phosphate (G3P). The polypeptide is Triosephosphate isomerase (Campylobacter concisus (strain 13826)).